The sequence spans 505 residues: ATP synthase subunit alpha, chloroplastic (505 aa).

Position 170–177 (170–177 (GDRQTGKT)) interacts with ATP.

It belongs to the ATPase alpha/beta chains family. In terms of assembly, F-type ATPases have 2 components, CF(1) - the catalytic core - and CF(0) - the membrane proton channel. CF(1) has five subunits: alpha(3), beta(3), gamma(1), delta(1), epsilon(1). CF(0) has four main subunits: a, b, b' and c.

The protein localises to the plastid. The protein resides in the chloroplast thylakoid membrane. It carries out the reaction ATP + H2O + 4 H(+)(in) = ADP + phosphate + 5 H(+)(out). Its function is as follows. Produces ATP from ADP in the presence of a proton gradient across the membrane. The alpha chain is a regulatory subunit. In Zygnema circumcarinatum (Green alga), this protein is ATP synthase subunit alpha, chloroplastic.